The sequence spans 173 residues: NADH-ubiquinone oxidoreductase chain 6 (173 aa).

5 helical membrane-spanning segments follow: residues 1–21 (MTYF…AVAS), 27–47 (YGVV…LSLG), 48–68 (VSFV…VVFV), 87–107 (VVGY…VGGF), and 139–159 (CGVG…FVVL).

It belongs to the complex I subunit 6 family.

It localises to the mitochondrion membrane. It carries out the reaction a ubiquinone + NADH + 5 H(+)(in) = a ubiquinol + NAD(+) + 4 H(+)(out). Its function is as follows. Core subunit of the mitochondrial membrane respiratory chain NADH dehydrogenase (Complex I) that is believed to belong to the minimal assembly required for catalysis. Complex I functions in the transfer of electrons from NADH to the respiratory chain. The immediate electron acceptor for the enzyme is believed to be ubiquinone. The sequence is that of NADH-ubiquinone oxidoreductase chain 6 (MT-ND6) from Aethia pygmaea (Whiskered auklet).